We begin with the raw amino-acid sequence, 247 residues long: Triosephosphate isomerase (247 aa).

Asn10 and Lys12 together coordinate substrate. The active-site Electrophile is His94. Glu164 serves as the catalytic Proton acceptor.

This sequence belongs to the triosephosphate isomerase family. As to quaternary structure, homodimer.

The protein localises to the cytoplasm. The enzyme catalyses D-glyceraldehyde 3-phosphate = dihydroxyacetone phosphate. The catalysed reaction is dihydroxyacetone phosphate = methylglyoxal + phosphate. It functions in the pathway carbohydrate biosynthesis; gluconeogenesis. The protein operates within carbohydrate degradation; glycolysis; D-glyceraldehyde 3-phosphate from glycerone phosphate: step 1/1. Its function is as follows. Triosephosphate isomerase is an extremely efficient metabolic enzyme that catalyzes the interconversion between dihydroxyacetone phosphate (DHAP) and D-glyceraldehyde-3-phosphate (G3P) in glycolysis and gluconeogenesis. It is also responsible for the non-negligible production of methylglyoxal a reactive cytotoxic side-product that modifies and can alter proteins, DNA and lipids. In Caenorhabditis elegans, this protein is Triosephosphate isomerase (tpi-1).